The chain runs to 344 residues: Probable dual-specificity RNA methyltransferase RlmN (344 aa).

Glutamate 83 acts as the Proton acceptor in catalysis. One can recognise a Radical SAM core domain in the interval 89-323 (YLDRKTICVS…VSVRRSRGKD (235 aa)). An intrachain disulfide couples cysteine 96 to cysteine 328. [4Fe-4S] cluster-binding residues include cysteine 103, cysteine 107, and cysteine 110. S-adenosyl-L-methionine is bound by residues 153–154 (GE), serine 185, 209–211 (SLH), and asparagine 285. Cysteine 328 (S-methylcysteine intermediate) is an active-site residue.

The protein belongs to the radical SAM superfamily. RlmN family. It depends on [4Fe-4S] cluster as a cofactor.

The protein resides in the cytoplasm. It catalyses the reaction adenosine(2503) in 23S rRNA + 2 reduced [2Fe-2S]-[ferredoxin] + 2 S-adenosyl-L-methionine = 2-methyladenosine(2503) in 23S rRNA + 5'-deoxyadenosine + L-methionine + 2 oxidized [2Fe-2S]-[ferredoxin] + S-adenosyl-L-homocysteine. The enzyme catalyses adenosine(37) in tRNA + 2 reduced [2Fe-2S]-[ferredoxin] + 2 S-adenosyl-L-methionine = 2-methyladenosine(37) in tRNA + 5'-deoxyadenosine + L-methionine + 2 oxidized [2Fe-2S]-[ferredoxin] + S-adenosyl-L-homocysteine. In terms of biological role, specifically methylates position 2 of adenine 2503 in 23S rRNA and position 2 of adenine 37 in tRNAs. This is Probable dual-specificity RNA methyltransferase RlmN from Deinococcus geothermalis (strain DSM 11300 / CIP 105573 / AG-3a).